A 224-amino-acid polypeptide reads, in one-letter code: Cytidylate kinase (224 aa).

11 to 19 (GPAAAGKST) is an ATP binding site.

Belongs to the cytidylate kinase family. Type 1 subfamily.

It is found in the cytoplasm. The catalysed reaction is CMP + ATP = CDP + ADP. It catalyses the reaction dCMP + ATP = dCDP + ADP. The protein is Cytidylate kinase of Geobacillus kaustophilus (strain HTA426).